A 363-amino-acid polypeptide reads, in one-letter code: MAP kinase kinase skh1/pek1 (363 aa).

The 265-residue stretch at 79–343 folds into the Protein kinase domain; the sequence is ILYMNSLGEG…PQKMLTHPWV (265 aa). ATP-binding positions include 85 to 93 and lysine 108; that span reads LGEGVSGSV. Residue aspartate 206 is the Proton acceptor of the active site. Serine 234 is modified (phosphoserine). A Phosphothreonine modification is found at threonine 238.

The protein belongs to the protein kinase superfamily. STE Ser/Thr protein kinase family. MAP kinase kinase subfamily.

The enzyme catalyses L-seryl-[protein] + ATP = O-phospho-L-seryl-[protein] + ADP + H(+). The catalysed reaction is L-threonyl-[protein] + ATP = O-phospho-L-threonyl-[protein] + ADP + H(+). It catalyses the reaction L-tyrosyl-[protein] + ATP = O-phospho-L-tyrosyl-[protein] + ADP + H(+). Activated by mkh1. In terms of biological role, involved in the mkh1 signal transduction pathway that plays a role in cell wall integrity. Activates spm1/pmk1 via phosphorylation. In Schizosaccharomyces pombe (strain 972 / ATCC 24843) (Fission yeast), this protein is MAP kinase kinase skh1/pek1 (skh1).